The primary structure comprises 522 residues: BTB/POZ domain-containing protein 3 (522 aa).

The interval 25-44 (RSKKSSKKANTSSSSSNSSK) is disordered. Residues 32-44 (KANTSSSSSNSSK) show a composition bias toward low complexity. The region spanning 120 to 190 (ADVHFVVGPP…IYCDEIDLAA (71 aa)) is the BTB domain. One can recognise a BACK domain in the interval 235–300 (FEEPDLTQRC…NWAEVECQRQ (66 aa)).

The protein resides in the cytoplasm. Its subcellular location is the cytosol. It localises to the nucleus. In terms of biological role, acts as a key regulator of dendritic field orientation during development of sensory cortex. Also directs dendrites toward active axon terminals when ectopically expressed. This Homo sapiens (Human) protein is BTB/POZ domain-containing protein 3 (BTBD3).